The following is a 502-amino-acid chain: Glycerol kinase (502 aa).

Threonine 14 is an ADP binding site. Residues threonine 14, threonine 15, and serine 16 each contribute to the ATP site. Sn-glycerol 3-phosphate is bound at residue threonine 14. Arginine 18 is an ADP binding site. Sn-glycerol 3-phosphate-binding residues include arginine 84, glutamate 85, tyrosine 136, and aspartate 246. Glycerol contacts are provided by arginine 84, glutamate 85, tyrosine 136, aspartate 246, and glutamine 247. Residues threonine 268 and glycine 311 each contribute to the ADP site. Positions 268, 311, 315, and 412 each coordinate ATP. The ADP site is built by glycine 412 and asparagine 416.

Belongs to the FGGY kinase family. In terms of assembly, homotetramer and homodimer (in equilibrium). Heterodimer with EIIA-Glc. Binds 1 zinc ion per glycerol kinase EIIA-Glc dimer. The zinc ion is important for dimerization.

It catalyses the reaction glycerol + ATP = sn-glycerol 3-phosphate + ADP + H(+). It participates in polyol metabolism; glycerol degradation via glycerol kinase pathway; sn-glycerol 3-phosphate from glycerol: step 1/1. Its activity is regulated as follows. Activity of this regulatory enzyme is affected by several metabolites. Allosterically and non-competitively inhibited by fructose 1,6-bisphosphate (FBP) and unphosphorylated phosphocarrier protein EIIA-Glc (III-Glc), an integral component of the bacterial phosphotransferase (PTS) system. Functionally, key enzyme in the regulation of glycerol uptake and metabolism. Catalyzes the phosphorylation of glycerol to yield sn-glycerol 3-phosphate. The chain is Glycerol kinase from Escherichia coli O81 (strain ED1a).